The following is a 260-amino-acid chain: tRNA pseudouridine synthase A (260 aa).

Asp-60 (nucleophile) is an active-site residue. Position 118 (Tyr-118) interacts with substrate.

This sequence belongs to the tRNA pseudouridine synthase TruA family. In terms of assembly, homodimer.

The catalysed reaction is uridine(38/39/40) in tRNA = pseudouridine(38/39/40) in tRNA. Formation of pseudouridine at positions 38, 39 and 40 in the anticodon stem and loop of transfer RNAs. This chain is tRNA pseudouridine synthase A, found in Leuconostoc citreum (strain KM20).